A 499-amino-acid polypeptide reads, in one-letter code: Alpha-amylase 3 (499 aa).

Ca(2+) contacts are provided by asparagine 127 and aspartate 183. Aspartate 213 acts as the Nucleophile in catalysis. Histidine 217 is a binding site for Ca(2+). Glutamate 248 serves as the catalytic Proton donor.

This sequence belongs to the glycosyl hydrolase 13 family. Monomer. The cofactor is Ca(2+).

The protein resides in the cytoplasm. The enzyme catalyses Endohydrolysis of (1-&gt;4)-alpha-D-glucosidic linkages in polysaccharides containing three or more (1-&gt;4)-alpha-linked D-glucose units.. The sequence is that of Alpha-amylase 3 (amyC) from Dictyoglomus thermophilum (strain ATCC 35947 / DSM 3960 / H-6-12).